A 781-amino-acid chain; its full sequence is Cadherin-24 (781 aa).

Residues 1 to 22 (MWGLVRLLLAWLGGWGCMGRLA) form the signal peptide. Positions 23-44 (APVPAWAGSRGHSGPTLLRTRR) are excised as a propeptide. The Extracellular portion of the chain corresponds to 45–603 (SWVWNQFFVI…LSPTGLSTGA (559 aa)). Cadherin domains are found at residues 46-150 (WVWN…PPVF), 151-259 (PLGP…PPKF), 260-374 (PQSL…PPAF), 375-479 (TQAT…APQL), and 479-592 (LAEP…WPEA). Residues N446, N510, and N525 are each glycosylated (N-linked (GlcNAc...) asparagine). A helical membrane pass occupies residues 604–624 (LLAIVTCMGTLLALVVLFVAL). Residues 625–781 (RRQKQEALMV…LYGAKEPPAP (157 aa)) are Cytoplasmic-facing. 2 disordered regions span residues 665-700 (LQNP…PGPA) and 731-762 (EGRG…LDDW). Over residues 733 to 746 (RGSSCGSLSSLGSG) the composition is skewed to low complexity.

As to quaternary structure, associates with alpha-, beta- and delta-catenins.

It is found in the cell membrane. In terms of biological role, cadherins are calcium-dependent cell adhesion proteins. They preferentially interact with themselves in a homophilic manner in connecting cells; cadherins may thus contribute to the sorting of heterogeneous cell types. Cadherin-24 mediate strong cell-cell adhesion. This chain is Cadherin-24 (Cdh24), found in Mus musculus (Mouse).